A 217-amino-acid polypeptide reads, in one-letter code: Probable cutinase 3 (217 aa).

The N-terminal stretch at 1 to 17 is a signal peptide; sequence MSLRSLFVAGLATLALA. 2 cysteine pairs are disulfide-bonded: Cys39/Cys118 and Cys65/Cys79. The Nucleophile role is filled by Ser129. Cys180 and Cys187 are disulfide-bonded. The active site involves Asp184. The Proton donor/acceptor role is filled by His197.

It belongs to the cutinase family.

The protein localises to the secreted. The catalysed reaction is cutin + H2O = cutin monomers.. Its function is as follows. Catalyzes the hydrolysis of complex carboxylic polyesters found in the cell wall of plants. Degrades cutin, a macromolecule that forms the structure of the plant cuticle. This chain is Probable cutinase 3, found in Aspergillus fumigatus (strain CBS 144.89 / FGSC A1163 / CEA10) (Neosartorya fumigata).